The following is a 308-amino-acid chain: MKPKIFIDGEHGTTGLQIRARMAGRSDLELLSIPEAERRNAALREDLLNGADIAILCLPDDASREAVAMVAGNNRVRIIDTSTAHRVAPDWAYGFAEMDKAQPAKIRDARHVSNPGCYPTGAIGVIRPLRQAGILPDGYPVTVNAVSGYTGGGKQMIAQIEDENHADHISAPHFLYGLPLKHKHVPEMKMHGMLERAPIFSPSVGKFPQGMIVQVPLYLDDLAPGATLESIHAALVEHYAGQSIVEVVPLSAQLARIDATELAGKDTMKLFVFGTPGGAHVNLVALLDNLGKGASGAAVQNMDLMLSA.

Cys117 is an active-site residue.

It belongs to the NAGSA dehydrogenase family. Type 2 subfamily.

It is found in the cytoplasm. The catalysed reaction is N-acetyl-L-glutamate 5-semialdehyde + phosphate + NADP(+) = N-acetyl-L-glutamyl 5-phosphate + NADPH + H(+). The protein operates within amino-acid biosynthesis; L-arginine biosynthesis; N(2)-acetyl-L-ornithine from L-glutamate: step 3/4. Its function is as follows. Catalyzes the NADPH-dependent reduction of N-acetyl-5-glutamyl phosphate to yield N-acetyl-L-glutamate 5-semialdehyde. The chain is N-acetyl-gamma-glutamyl-phosphate reductase from Sinorhizobium fredii (strain NBRC 101917 / NGR234).